A 126-amino-acid polypeptide reads, in one-letter code: Large ribosomal subunit protein bL17 (126 aa).

The protein belongs to the bacterial ribosomal protein bL17 family. As to quaternary structure, part of the 50S ribosomal subunit. Contacts protein L32.

The sequence is that of Large ribosomal subunit protein bL17 from Vibrio atlanticus (strain LGP32) (Vibrio splendidus (strain Mel32)).